Consider the following 212-residue polypeptide: NAD(P)H dehydrogenase (quinone) 3 (212 aa).

The Flavodoxin-like domain maps to 4–192 (MLVLYYSSYG…DGARFQGRHV (189 aa)). Residues 10–15 (SSYGHI) and 78–80 (TRF) contribute to the FMN site. Y12 is a binding site for NAD(+). Substrate is bound at residue W98. FMN is bound by residues 113 to 119 (STGSQHG) and H134. A disordered region spans residues 161–182 (YGASTLAEDENHRDRSPSANEL).

Belongs to the WrbA family. It depends on FMN as a cofactor.

The enzyme catalyses a quinone + NADH + H(+) = a quinol + NAD(+). It catalyses the reaction a quinone + NADPH + H(+) = a quinol + NADP(+). The chain is NAD(P)H dehydrogenase (quinone) 3 from Rhizobium meliloti (strain 1021) (Ensifer meliloti).